Reading from the N-terminus, the 668-residue chain is Break repair meiotic recombinase recruitment factor 1 (668 aa).

Disordered regions lie at residues 1-142 (MTKR…AQSP), 155-333 (LQEA…GCSS), 349-465 (LEER…GGQN), 482-521 (VLEH…HSAD), and 642-668 (LGGK…WREL). A compositionally biased stretch (basic and acidic residues) spans 114–125 (TRKEEMKDEDRG). The span at 166–180 (QADSARPEQSSQSPV) shows a compositional bias: polar residues. Residues 208–251 (SQDHLSEQGADDSKPETDRVPGDGGQKEHLPSIDSEGEKPDRGA) show a composition bias toward basic and acidic residues. The segment covering 279–296 (TPASAPTSGPAPGLGPAS) has biased composition (low complexity). The segment covering 305-316 (AQGSPDPQQTPS) has biased composition (polar residues). Phosphoserine is present on serine 370. A compositionally biased stretch (low complexity) spans 391–400 (TGETTGESGE).

As to quaternary structure, interacts with HSF2BP (via N-terminus) and BRCA2; the interaction with HSF2BP is direct and allows the formation of a ternary complex. The complex BRME1:HSF2BP:BRCA2 interacts with SPATA22, MEIOB and RAD51.

It localises to the chromosome. Functionally, meiotic recombination factor component of recombination bridges involved in meiotic double-strand break repair. Modulates the localization of recombinases DMC1:RAD51 to meiotic double-strand break (DSB) sites through the interaction with and stabilization of the BRCA2:HSF2BP complex during meiotic recombination. Indispensable for the DSB repair, homologous synapsis, and crossover formation that are needed for progression past metaphase I, is essential for spermatogenesis and male fertility. This Homo sapiens (Human) protein is Break repair meiotic recombinase recruitment factor 1.